A 456-amino-acid chain; its full sequence is tRNA modification GTPase MnmE (456 aa).

Arg-24, Glu-81, and Lys-120 together coordinate (6S)-5-formyl-5,6,7,8-tetrahydrofolate. The TrmE-type G domain maps to 216–379; that stretch reads GMKVVIAGRP…LREHLKECIG (164 aa). Asn-226 provides a ligand contact to K(+). GTP is bound by residues 226 to 231, 245 to 251, and 270 to 273; these read NAGKSS, TAIEGTT, and DTAG. Ser-230 is a binding site for Mg(2+). Residues Thr-245, Ile-247, and Thr-250 each coordinate K(+). Position 251 (Thr-251) interacts with Mg(2+). Lys-456 provides a ligand contact to (6S)-5-formyl-5,6,7,8-tetrahydrofolate.

Belongs to the TRAFAC class TrmE-Era-EngA-EngB-Septin-like GTPase superfamily. TrmE GTPase family. Homodimer. Heterotetramer of two MnmE and two MnmG subunits. The cofactor is K(+).

The protein localises to the cytoplasm. Functionally, exhibits a very high intrinsic GTPase hydrolysis rate. Involved in the addition of a carboxymethylaminomethyl (cmnm) group at the wobble position (U34) of certain tRNAs, forming tRNA-cmnm(5)s(2)U34. This is tRNA modification GTPase MnmE from Marinobacter nauticus (strain ATCC 700491 / DSM 11845 / VT8) (Marinobacter aquaeolei).